The following is a 135-amino-acid chain: Allatotropins (135 aa).

The first 22 residues, 1 to 22 (MNFSMHLVLAVAAAACLCVVTA), serve as a signal peptide directing secretion. Phe-51 is subject to Phenylalanine amide. A propeptide spanning residues 55-135 (DRPHTRAELY…SSEELLRNVA (81 aa)) is cleaved from the precursor.

In terms of tissue distribution, allatotropin: Expressed in corpora cardiaca (CC), corpora allata (CA), antennal lobe (AL) and gnathal ganglion (GNG) (protein level). Expression in AL detected in all animals, expression in GNG detected in most animals and expression in CA and CC detected in few animals (at protein level). Allatotropin-PP-1: Expressed in corpora cardiaca (CC), corpora allata (CA), antennal lobe (AL) and gnathal ganglion (GNG) (at protein level). Expression in AL detected in all animals and expression in GNG, CA and CC detected in some animals (at protein level).

Its subcellular location is the secreted. Its function is as follows. Neuropeptide stimulator of juvenile hormone synthesis. This chain is Allatotropins, found in Agrotis ipsilon (Black cutworm moth).